Here is a 102-residue protein sequence, read N- to C-terminus: Small ribosomal subunit protein uS10 (102 aa).

This sequence belongs to the universal ribosomal protein uS10 family. In terms of assembly, part of the 30S ribosomal subunit.

Involved in the binding of tRNA to the ribosomes. This is Small ribosomal subunit protein uS10 from Streptococcus equi subsp. zooepidemicus (strain MGCS10565).